The chain runs to 123 residues: Large ribosomal subunit protein eL8 (123 aa).

The protein belongs to the eukaryotic ribosomal protein eL8 family. Part of the 50S ribosomal subunit. Probably part of the RNase P complex.

It localises to the cytoplasm. Multifunctional RNA-binding protein that recognizes the K-turn motif in ribosomal RNA, the RNA component of RNase P, box H/ACA, box C/D and box C'/D' sRNAs. This chain is Large ribosomal subunit protein eL8, found in Methanosphaera stadtmanae (strain ATCC 43021 / DSM 3091 / JCM 11832 / MCB-3).